We begin with the raw amino-acid sequence, 552 residues long: Ribosomal lysine N-methyltransferase 3 (552 aa).

The 310-residue stretch at 26 to 335 folds into the SET domain; that stretch reads SKCDIRESPL…QGQEIFNSYG (310 aa). Residue tyrosine 334 coordinates S-adenosyl-L-methionine. The tract at residues 399 to 432 is disordered; the sequence is EDEEDEDGQAKSDNLSDDIESEEEEEEEEGDDSL. Residues 413-432 show a composition bias toward acidic residues; that stretch reads LSDDIESEEEEEEEEGDDSL.

This sequence belongs to the class V-like SAM-binding methyltransferase superfamily.

Its subcellular location is the nucleus. Its function is as follows. S-adenosyl-L-methionine-dependent protein-lysine N-methyltransferase that monomethylates 60S ribosomal protein L42 (RPL42A and RPL42B) at 'Lys-40'. The chain is Ribosomal lysine N-methyltransferase 3 from Saccharomyces cerevisiae (strain ATCC 204508 / S288c) (Baker's yeast).